The following is a 106-amino-acid chain: Large ribosomal subunit protein eL42Q (106 aa).

Belongs to the eukaryotic ribosomal protein eL42 family.

This chain is Large ribosomal subunit protein eL42Q (RIM-C), found in Candida maltosa (Yeast).